The sequence spans 389 residues: Cytochrome b (389 aa).

Transmembrane regions (helical) follow at residues 32–52 (FGSL…FLAM), 76–98 (YILR…VHIG), 113–133 (LWSI…LGYV), and 179–199 (FFSL…AHMI). Histidine 82 and histidine 96 together coordinate heme b. Histidine 183 and histidine 197 together coordinate heme b. Histidine 202 is a binding site for a ubiquinone. Helical transmembrane passes span 225-245 (FIFK…IIVF), 289-309 (LLGV…PFVD), 322-342 (INMV…LVGA), and 349-369 (FIFL…VIVP).

The protein belongs to the cytochrome b family. Fungal cytochrome b-c1 complex contains 10 subunits; 3 respiratory subunits, 2 core proteins and 5 low-molecular weight proteins. Cytochrome b-c1 complex is a homodimer. Heme b is required as a cofactor.

It localises to the mitochondrion inner membrane. In terms of biological role, component of the ubiquinol-cytochrome c reductase complex (complex III or cytochrome b-c1 complex) that is part of the mitochondrial respiratory chain. The b-c1 complex mediates electron transfer from ubiquinol to cytochrome c. Contributes to the generation of a proton gradient across the mitochondrial membrane that is then used for ATP synthesis. The chain is Cytochrome b (COB) from Mycena viridimarginata.